Consider the following 172-residue polypeptide: Signal peptidase complex catalytic subunit SEC11 (172 aa).

Residues 1–14 (MLSSLGNPRQAATQ) lie on the Cytoplasmic side of the membrane. The helical; Signal-anchor for type II membrane protein transmembrane segment at 15-35 (LLNFALILSTAFMMWKGLSVA) threads the bilayer. The Lumenal portion of the chain corresponds to 36 to 172 (TDSPSPIVVV…MGLMVVLQRE (137 aa)). Catalysis depends on charge relay system residues Ser-49, His-90, and Asp-115. The interval 158 to 169 (AMLGIMGLMVVL) is C-terminal short (CTS) helix.

It belongs to the peptidase S26B family. In terms of assembly, component of the signal peptidase complex (SPC) composed of a catalytic subunit SEC11 and three accessory subunits SPC1, SPC2 and SPC3. The complex induces a local thinning of the ER membrane which is used to measure the length of the signal peptide (SP) h-region of protein substrates. This ensures the selectivity of the complex towards h-regions shorter than 18-20 amino acids. SPC associates with the translocon complex.

The protein localises to the endoplasmic reticulum membrane. The catalysed reaction is Cleavage of hydrophobic, N-terminal signal or leader sequences from secreted and periplasmic proteins.. Functionally, catalytic component of the signal peptidase complex (SPC) which catalyzes the cleavage of N-terminal signal sequences from nascent proteins as they are translocated into the lumen of the endoplasmic reticulum. Specifically cleaves N-terminal signal peptides that contain a hydrophobic alpha-helix (h-region) shorter than 18-20 amino acids. This chain is Signal peptidase complex catalytic subunit SEC11 (SEC11), found in Pyricularia oryzae (strain 70-15 / ATCC MYA-4617 / FGSC 8958) (Rice blast fungus).